The chain runs to 568 residues: Protein disconnected (568 aa).

The tract at residues 16 to 77 (GHGPHSHQHV…PRRWGSPPIN (62 aa)) is disordered. A compositionally biased stretch (basic residues) spans 19–29 (PHSHQHVHSHL). Over residues 30–45 (PSHPQPNAASPASSPG) the composition is skewed to low complexity. Residues 46–62 (GSSGSGSGSAAGSGTGS) are compositionally biased toward gly residues. C2H2-type zinc fingers lie at residues 92–115 (VQCS…SAVH) and 120–145 (HKCT…ANPN). 4 disordered regions span residues 134–157 (RRSR…RRKI), 220–364 (LLST…SDAF), 391–419 (SSAS…DSDS), and 501–568 (QQYN…PISV). Residues 235 to 246 (NEQDADPEDDND) are compositionally biased toward acidic residues. Over residues 253 to 263 (QANSSSPAASS) the composition is skewed to polar residues. Residues 282–292 (SLSLASSSSIA) show a composition bias toward low complexity. Basic and acidic residues predominate over residues 313–360 (SEQDREQEQEQEQEREREAEKEQEQDVESDKEHEPEQEHELEREKRSP). Low complexity predominate over residues 391-402 (SSASSSSASASA). Basic residues predominate over residues 520–550 (HLTLSHHHQEQHHHLGHHHMGHHHHHHHQHH). Residues 558 to 568 (SPAATNAPISV) are compositionally biased toward polar residues.

Expressed at low levels in the adult head and very low, but detectable, levels in the body.

Its subcellular location is the nucleus. Required for the establishment of stable connections between the larval optic nerves, the Bolwig's nerves, and their target cells in the brain during embryonic development. This Drosophila melanogaster (Fruit fly) protein is Protein disconnected (disco).